Reading from the N-terminus, the 909-residue chain is Protein translocase subunit SecA (909 aa).

Residues glutamine 87, 105–109 (GEGKT), and aspartate 507 contribute to the ATP site. Residues 834–909 (EAVEEQRRRQ…KYKQCCGKLS (76 aa)) are disordered. Residues 837–848 (EEQRRRQGDMQY) show a composition bias toward basic and acidic residues. A compositionally biased stretch (gly residues) spans 859-871 (QGAGGEGAAGGTA). The Zn(2+) site is built by cysteine 893, cysteine 895, cysteine 904, and cysteine 905.

The protein belongs to the SecA family. In terms of assembly, monomer and homodimer. Part of the essential Sec protein translocation apparatus which comprises SecA, SecYEG and auxiliary proteins SecDF-YajC and YidC. The cofactor is Zn(2+).

The protein resides in the cell inner membrane. The protein localises to the cytoplasm. The enzyme catalyses ATP + H2O + cellular proteinSide 1 = ADP + phosphate + cellular proteinSide 2.. In terms of biological role, part of the Sec protein translocase complex. Interacts with the SecYEG preprotein conducting channel. Has a central role in coupling the hydrolysis of ATP to the transfer of proteins into and across the cell membrane, serving both as a receptor for the preprotein-SecB complex and as an ATP-driven molecular motor driving the stepwise translocation of polypeptide chains across the membrane. The protein is Protein translocase subunit SecA of Alkalilimnicola ehrlichii (strain ATCC BAA-1101 / DSM 17681 / MLHE-1).